Here is a 314-residue protein sequence, read N- to C-terminus: tRNA pseudouridine synthase B (314 aa).

Catalysis depends on Asp54, which acts as the Nucleophile.

Belongs to the pseudouridine synthase TruB family. Type 1 subfamily.

It catalyses the reaction uridine(55) in tRNA = pseudouridine(55) in tRNA. Responsible for synthesis of pseudouridine from uracil-55 in the psi GC loop of transfer RNAs. The protein is tRNA pseudouridine synthase B of Ralstonia nicotianae (strain ATCC BAA-1114 / GMI1000) (Ralstonia solanacearum).